Consider the following 123-residue polypeptide: Small ribosomal subunit protein uS12 (123 aa).

The residue at position 89 (D89) is a 3-methylthioaspartic acid. The disordered stretch occupies residues 101–123; it reads TLDTQGVKDRRQRRSKYGAKRPK. Residues 110 to 123 show a composition bias toward basic residues; it reads RRQRRSKYGAKRPK.

It belongs to the universal ribosomal protein uS12 family. As to quaternary structure, part of the 30S ribosomal subunit. Contacts proteins S8 and S17. May interact with IF1 in the 30S initiation complex.

Functionally, with S4 and S5 plays an important role in translational accuracy. Its function is as follows. Interacts with and stabilizes bases of the 16S rRNA that are involved in tRNA selection in the A site and with the mRNA backbone. Located at the interface of the 30S and 50S subunits, it traverses the body of the 30S subunit contacting proteins on the other side and probably holding the rRNA structure together. The combined cluster of proteins S8, S12 and S17 appears to hold together the shoulder and platform of the 30S subunit. This chain is Small ribosomal subunit protein uS12, found in Paramagnetospirillum magneticum (strain ATCC 700264 / AMB-1) (Magnetospirillum magneticum).